A 406-amino-acid chain; its full sequence is Histone-lysine N-methyltransferase SUV39H2 (406 aa).

Residues 43–101 form the Chromo domain; sequence YEVEYLCDYRIEKGVEKFFVKWKGWPESCNTWEPTRNLKCPTLLKQFYSDLYNYFCALK. The Pre-SET domain maps to 185-243; that stretch reads VGCDCSDCFKGKCCPTEAGVLFAYNEHRQIKIPPGRPIYECNSRCKCGPDCPNRVVQKG. 9 residues coordinate Zn(2+): Cys-187, Cys-189, Cys-192, Cys-197, Cys-198, Cys-225, Cys-229, Cys-231, and Cys-235. The SET domain occupies 246 to 369; the sequence is YSLCIFRTDN…AGEELTFDYQ (124 aa). Residues 257–259, Tyr-300, and 326–327 each bind S-adenosyl-L-methionine; these read RGW and NH. Positions 329, 394, 396, and 401 each coordinate Zn(2+). One can recognise a Post-SET domain in the interval 390-406; it reads VRIACKCGAATCRGYLN.

The protein belongs to the class V-like SAM-binding methyltransferase superfamily. Histone-lysine methyltransferase family. Suvar3-9 subfamily.

It localises to the nucleus. The protein resides in the chromosome. Its subcellular location is the centromere. It catalyses the reaction L-lysyl(9)-[histone H3] + 3 S-adenosyl-L-methionine = N(6),N(6),N(6)-trimethyl-L-lysyl(9)-[histone H3] + 3 S-adenosyl-L-homocysteine + 3 H(+). Functionally, histone methyltransferase that specifically trimethylates 'Lys-9' of histone H3 using monomethylated H3 'Lys-9' as substrate. H3 'Lys-9' trimethylation represents a specific tag for epigenetic transcriptional repression by recruiting HP1 (CBX1, CBX3 and/or CBX5) proteins to methylated histones. Mainly functions in heterochromatin regions, thereby playing a central role in the establishment of constitutive heterochromatin at pericentric and telomere regions. H3 'Lys-9' trimethylation is also required to direct DNA methylation at pericentric repeats. SUV39H1 is targeted to histone H3 via its interaction with RB1 and is involved in many processes. The chain is Histone-lysine N-methyltransferase SUV39H2 (suv39h2) from Xenopus tropicalis (Western clawed frog).